The sequence spans 187 residues: Protein GrpE (187 aa).

Residues 1 to 25 (MADEQNLDNRAPEETPAAEGTSAGE) are disordered.

The protein belongs to the GrpE family. As to quaternary structure, homodimer.

The protein localises to the cytoplasm. Functionally, participates actively in the response to hyperosmotic and heat shock by preventing the aggregation of stress-denatured proteins, in association with DnaK and GrpE. It is the nucleotide exchange factor for DnaK and may function as a thermosensor. Unfolded proteins bind initially to DnaJ; upon interaction with the DnaJ-bound protein, DnaK hydrolyzes its bound ATP, resulting in the formation of a stable complex. GrpE releases ADP from DnaK; ATP binding to DnaK triggers the release of the substrate protein, thus completing the reaction cycle. Several rounds of ATP-dependent interactions between DnaJ, DnaK and GrpE are required for fully efficient folding. This chain is Protein GrpE, found in Azotobacter vinelandii (strain DJ / ATCC BAA-1303).